Here is a 463-residue protein sequence, read N- to C-terminus: Retinoic acid receptor RXR-gamma (463 aa).

The modulating stretch occupies residues 1 to 138 (MYGNYSHFMK…TSPGSLVKHI (138 aa)). Residues 16 to 53 (GGSPGHTGSTSMSPSVALPTGKPMDSHPSYTDTPVSAP) form a disordered region. 2 NR C4-type zinc fingers span residues 139–159 (CAIC…CEGC) and 175–199 (CRDN…YQKC). Positions 139–204 (CAICGDRSSG…RYQKCLVMGM (66 aa)) form a DNA-binding region, nuclear receptor. The tract at residues 205 to 230 (KREAVQEERQRSRERAESEAECASSS) is hinge. The segment covering 211 to 222 (EERQRSRERAES) has biased composition (basic and acidic residues). The disordered stretch occupies residues 211–232 (EERQRSRERAESEAECASSSHE). The region spanning 231–459 (HEDMPVERIL…SFLMEMLETP (229 aa)) is the NR LBD domain.

The protein belongs to the nuclear hormone receptor family. NR2 subfamily. In terms of assembly, homodimer. Heterodimer with a RAR molecule. Binds DNA preferentially as a RAR/RXR heterodimer. Interacts with RARA. In terms of processing, acetylated by EP300.

Its subcellular location is the nucleus. It is found in the cytoplasm. In terms of biological role, receptor for retinoic acid. Retinoic acid receptors bind as heterodimers to their target response elements in response to their ligands, all-trans or 9-cis retinoic acid, and regulate gene expression in various biological processes. The RAR/RXR heterodimers bind to the retinoic acid response elements (RARE) composed of tandem 5'-AGGTCA-3' sites known as DR1-DR5. The high affinity ligand for RXRs is 9-cis retinoic acid. In Mus musculus (Mouse), this protein is Retinoic acid receptor RXR-gamma (Rxrg).